Here is a 212-residue protein sequence, read N- to C-terminus: MFDSKQLSVYFICGTQDIPKNKSIEQVLKEALEAGITLYQFREKGPNALKGEKKKQLALKLKQLCHSYHVPMIVNDDVQLAQEINADGIHVGQDDMEIQQFASQFKNKIIGLSVGNLKEYQQSDLSKVDYIGVGPMYTTSSKDDASKPVGPSMISQLRLYIHDFPIVAIGGINETNVQPIVDEGADGISVISAITRSTNIDKTVKYFLRYFT.

Residues 40–44 and Asn-75 contribute to the 4-amino-2-methyl-5-(diphosphooxymethyl)pyrimidine site; that span reads QFREK. Mg(2+) is bound by residues Asp-76 and Asp-95. Ser-113 contacts 4-amino-2-methyl-5-(diphosphooxymethyl)pyrimidine. Position 139-141 (139-141) interacts with 2-[(2R,5Z)-2-carboxy-4-methylthiazol-5(2H)-ylidene]ethyl phosphate; it reads TSS. Lys-142 serves as a coordination point for 4-amino-2-methyl-5-(diphosphooxymethyl)pyrimidine. 2-[(2R,5Z)-2-carboxy-4-methylthiazol-5(2H)-ylidene]ethyl phosphate is bound by residues Gly-171 and 191–192; that span reads IS.

It belongs to the thiamine-phosphate synthase family. Mg(2+) serves as cofactor.

The catalysed reaction is 2-[(2R,5Z)-2-carboxy-4-methylthiazol-5(2H)-ylidene]ethyl phosphate + 4-amino-2-methyl-5-(diphosphooxymethyl)pyrimidine + 2 H(+) = thiamine phosphate + CO2 + diphosphate. The enzyme catalyses 2-(2-carboxy-4-methylthiazol-5-yl)ethyl phosphate + 4-amino-2-methyl-5-(diphosphooxymethyl)pyrimidine + 2 H(+) = thiamine phosphate + CO2 + diphosphate. It carries out the reaction 4-methyl-5-(2-phosphooxyethyl)-thiazole + 4-amino-2-methyl-5-(diphosphooxymethyl)pyrimidine + H(+) = thiamine phosphate + diphosphate. Its pathway is cofactor biosynthesis; thiamine diphosphate biosynthesis; thiamine phosphate from 4-amino-2-methyl-5-diphosphomethylpyrimidine and 4-methyl-5-(2-phosphoethyl)-thiazole: step 1/1. In terms of biological role, condenses 4-methyl-5-(beta-hydroxyethyl)thiazole monophosphate (THZ-P) and 2-methyl-4-amino-5-hydroxymethyl pyrimidine pyrophosphate (HMP-PP) to form thiamine monophosphate (TMP). This chain is Thiamine-phosphate synthase, found in Staphylococcus epidermidis (strain ATCC 35984 / DSM 28319 / BCRC 17069 / CCUG 31568 / BM 3577 / RP62A).